We begin with the raw amino-acid sequence, 82 residues long: Small ribosomal subunit protein uS17 (82 aa).

This sequence belongs to the universal ribosomal protein uS17 family. Part of the 30S ribosomal subunit.

In terms of biological role, one of the primary rRNA binding proteins, it binds specifically to the 5'-end of 16S ribosomal RNA. This chain is Small ribosomal subunit protein uS17, found in Shewanella halifaxensis (strain HAW-EB4).